Reading from the N-terminus, the 326-residue chain is Dolichyl-phosphate beta-glucosyltransferase (326 aa).

Residues 1–7 (MWTCLCQ) are Lumenal-facing. A helical transmembrane segment spans residues 8 to 28 (LCFYLLSTLAVAALSIAALVL). Residues 29 to 326 (YKTKPYPNIK…RIASIQKKEK (298 aa)) lie on the Cytoplasmic side of the membrane.

This sequence belongs to the glycosyltransferase 2 family.

It is found in the endoplasmic reticulum membrane. The catalysed reaction is a di-trans,poly-cis-dolichyl phosphate + UDP-alpha-D-glucose = a di-trans,poly-cis-dolichyl beta-D-glucosyl phosphate + UDP. It participates in protein modification; protein glycosylation. Functionally, required for normal production of N-glycosylated proteins in the endoplasmic reticulum (ER). Required for embryonic segmentation, dorsal-ventral patterning and gastrulation. Required for chitin orientation and shaping of the apical and lateral plasma membranes of epidermal cells during cuticle differentiation. Also required for correctly shaping apical membrane topology of the epithelia of other organs such as the midgut and the hindgut. The sequence is that of Dolichyl-phosphate beta-glucosyltransferase (wol) from Drosophila melanogaster (Fruit fly).